Consider the following 629-residue polypeptide: Phosphomethylpyrimidine synthase (629 aa).

Residues M1–G20 form a disordered region. Residues N233, M262, Y291, H327, S347–G349, D388–R391, and E427 contribute to the substrate site. H431 contributes to the Zn(2+) binding site. Y454 provides a ligand contact to substrate. H495 contributes to the Zn(2+) binding site. Residues C575, C578, and C583 each contribute to the [4Fe-4S] cluster site.

Belongs to the ThiC family. In terms of assembly, homodimer. [4Fe-4S] cluster serves as cofactor.

It catalyses the reaction 5-amino-1-(5-phospho-beta-D-ribosyl)imidazole + S-adenosyl-L-methionine = 4-amino-2-methyl-5-(phosphooxymethyl)pyrimidine + CO + 5'-deoxyadenosine + formate + L-methionine + 3 H(+). It participates in cofactor biosynthesis; thiamine diphosphate biosynthesis. Catalyzes the synthesis of the hydroxymethylpyrimidine phosphate (HMP-P) moiety of thiamine from aminoimidazole ribotide (AIR) in a radical S-adenosyl-L-methionine (SAM)-dependent reaction. In Pseudomonas savastanoi pv. phaseolicola (strain 1448A / Race 6) (Pseudomonas syringae pv. phaseolicola (strain 1448A / Race 6)), this protein is Phosphomethylpyrimidine synthase.